The primary structure comprises 638 residues: Phosphomethylpyrimidine synthase (638 aa).

Residues Asn-243, Met-272, Tyr-301, His-337, 357–359, 398–401, and Glu-437 contribute to the substrate site; these read SRG and DGLR. His-441 serves as a coordination point for Zn(2+). Tyr-464 provides a ligand contact to substrate. Zn(2+) is bound at residue His-505. Residues Cys-585, Cys-588, and Cys-593 each contribute to the [4Fe-4S] cluster site.

Belongs to the ThiC family. Homodimer. Requires [4Fe-4S] cluster as cofactor.

The enzyme catalyses 5-amino-1-(5-phospho-beta-D-ribosyl)imidazole + S-adenosyl-L-methionine = 4-amino-2-methyl-5-(phosphooxymethyl)pyrimidine + CO + 5'-deoxyadenosine + formate + L-methionine + 3 H(+). Its pathway is cofactor biosynthesis; thiamine diphosphate biosynthesis. Catalyzes the synthesis of the hydroxymethylpyrimidine phosphate (HMP-P) moiety of thiamine from aminoimidazole ribotide (AIR) in a radical S-adenosyl-L-methionine (SAM)-dependent reaction. This Aromatoleum aromaticum (strain DSM 19018 / LMG 30748 / EbN1) (Azoarcus sp. (strain EbN1)) protein is Phosphomethylpyrimidine synthase.